The following is a 172-amino-acid chain: MAYYTVGTIVNTHGIKGEVRVVATTDFPESRFAVGSTLYAFQKDQATPVTLTVASVRQHKNFYLLSFEGKPSINDVEIFKQSTLKVTDNELESNDLRPGEYYYHQIVGLDAVTVDGENLGKIKEILSPGANDVWVVARPGKSDLLLPKIDQVIKRVDLDQGKVIVELMEGLD.

Positions Pro98–Leu171 constitute a PRC barrel domain.

The protein belongs to the RimM family. As to quaternary structure, binds ribosomal protein uS19.

It is found in the cytoplasm. Functionally, an accessory protein needed during the final step in the assembly of 30S ribosomal subunit, possibly for assembly of the head region. Essential for efficient processing of 16S rRNA. May be needed both before and after RbfA during the maturation of 16S rRNA. It has affinity for free ribosomal 30S subunits but not for 70S ribosomes. The polypeptide is Ribosome maturation factor RimM (Levilactobacillus brevis (strain ATCC 367 / BCRC 12310 / CIP 105137 / JCM 1170 / LMG 11437 / NCIMB 947 / NCTC 947) (Lactobacillus brevis)).